We begin with the raw amino-acid sequence, 408 residues long: tRNA pseudouridine synthase D (408 aa).

Catalysis depends on Asp-76, which acts as the Nucleophile. The 214-residue stretch at 149-362 (GFINYYDSQR…NSFERKVRIL (214 aa)) folds into the TRUD domain.

The protein belongs to the pseudouridine synthase TruD family.

The enzyme catalyses uridine(13) in tRNA = pseudouridine(13) in tRNA. Responsible for synthesis of pseudouridine from uracil-13 in transfer RNAs. In Leptospira interrogans serogroup Icterohaemorrhagiae serovar Lai (strain 56601), this protein is tRNA pseudouridine synthase D.